We begin with the raw amino-acid sequence, 796 residues long: Cadherin-11 (796 aa).

Residues 1-22 (MKENYCLQAALVCLGMLCHSHA) form the signal peptide. Positions 23–53 (FAPERRGHLRPSFHGHHEKGKEGQVLQRSKR) are excised as a propeptide. Cadherin domains lie at 54-159 (GWVW…PPEF), 160-268 (LHET…PPKF), 269-383 (PQSV…PPMF), 384-486 (LAPS…DNAP), and 487-612 (KFAA…YILN). The Extracellular segment spans residues 54 to 617 (GWVWNQFFVI…AYILNAGLST (564 aa)). 2 N-linked (GlcNAc...) asparagine glycosylation sites follow: N455 and N540. The helical transmembrane segment at 618-640 (GALIAILACIVILLVIVVLFVTL) threads the bilayer. The Cytoplasmic segment spans residues 641–796 (RRQKKEPLIV…GSKDTFDDDS (156 aa)). The residue at position 788 (S788) is a Phosphoserine. The residue at position 791 (T791) is a Phosphothreonine.

In terms of assembly, interacts with PCDH8. Expressed mainly in brain but also found in other tissues. Expressed in neuroblasts. In the embryo from 67 to 72 days of gestation, detected at high levels in facial mesenchyme including the central palatal mesenchyme, dental mesenchyme, the eye and optic muscle, and the tongue (at protein level).

It is found in the cell membrane. In terms of biological role, cadherins are calcium-dependent cell adhesion proteins. They preferentially interact with themselves in a homophilic manner in connecting cells; cadherins may thus contribute to the sorting of heterogeneous cell types. Required for proper focal adhesion assembly. Involved in the regulation of cell migration. This chain is Cadherin-11 (CDH11), found in Homo sapiens (Human).